We begin with the raw amino-acid sequence, 471 residues long: Protein hedgehog (471 aa).

C85 is lipidated: N-palmitoyl cysteine. Positions 149, 150, 155, 185, 186, 189, and 191 each coordinate Ca(2+). G257 carries Cholesterol glycine ester lipidation.

Belongs to the hedgehog family. In terms of assembly, interacts with shf. Interacts with ptc and CG5504/l(2)tid. Post-translationally, the C-terminal part of the hedgehog protein precursor displays an autoproteolysis activity that results in the cleavage of the full-length protein into two parts (N-product and C-product). In addition, the C-terminal part displays a cholesterol transferase activity that results by the covalent attachment of a cholesterol moiety to the C-terminal of the newly generated N-product. The N-product is the active species in both local and long-range signaling, whereas the C-product has no signaling activity. In terms of processing, cholesterylation is required for N-product targeting to lipid rafts and multimerization. N-palmitoylation by Rasp of the hedgehog N-product, within the secretory pathway, is required for the embryonic and larval patterning activities of the hedgehog signal. As to expression, in embryos, expression starts at stage 5 as a few stripes at the anterior and posterior ends, this expands to 17 stripes during stages 8-11. Expression is also seen in CNS and some PNS cells until stage 13-14, and in foregut, hindgut and salivary glands. In larvae, expression is seen in the posterior compartment of the wing, leg and antennal imaginal disks. In adults, high level of expression in specific regions of the proventriculus and hindgut, with slightly lower levels of expression in the posterior midgut. Relatively low levels of expression in the anterior midgut region.

Its subcellular location is the nucleus. It localises to the cytoplasm. The protein localises to the cell membrane. It catalyses the reaction glycyl-L-cysteinyl-[protein] + cholesterol + H(+) = [protein]-C-terminal glycyl cholesterol ester + N-terminal L-cysteinyl-[protein]. The C-terminal part of the hedgehog protein precursor displays an autoproteolysis activity that results in the cleavage of the full-length protein into two parts (N-product and C-product). In addition, the C-terminal part displays a cholesterol transferase activity that results by the covalent attachment of a cholesterol moiety to the C-terminal of the newly generated N-product. Once cleaved, the C-product has no signaling activity and diffuses from the cell. In terms of biological role, the dually lipidated hedgehog protein N-product is a morphogen which is essential for a variety of patterning events during development. Establishes the anterior-posterior axis of the embryonic segments and patterns the larval imaginal disks. Binds to the patched (ptc) receptor, which functions in association with smoothened (smo), to activate the transcription of target genes wingless (wg), decapentaplegic (dpp) and ptc. In the absence of hh, ptc represses the constitutive signaling activity of smo through fused (fu). Essential component of a signaling pathway which regulates the Duox-dependent gut immune response to bacterial uracil; required to activate Cad99C-dependent endosome formation, norpA-dependent Ca2+ mobilization and p38 MAPK, which are essential steps in the Duox-dependent production of reactive oxygen species (ROS) in response to intestinal bacterial infection. During photoreceptor differentiation, it up-regulates transcription of Ubr3, which in turn promotes the hh-signaling pathway by mediating the ubiquitination and degradation of cos. The sequence is that of Protein hedgehog from Drosophila melanogaster (Fruit fly).